We begin with the raw amino-acid sequence, 291 residues long: Deaminated glutathione amidase (291 aa).

The region spanning 13–268 (KRIGLGQITS…NDIAFVDIDL (256 aa)) is the CN hydrolase domain. The Proton acceptor role is filled by Glu52. Lys130 acts as the Proton donor in catalysis. Cys172 serves as the catalytic Nucleophile.

It belongs to the carbon-nitrogen hydrolase superfamily. NIT1/NIT2 family.

It catalyses the reaction N-(4-oxoglutaryl)-L-cysteinylglycine + H2O = L-cysteinylglycine + 2-oxoglutarate. In terms of biological role, catalyzes the hydrolysis of the amide bond in N-(4-oxoglutarate)-L-cysteinylglycine (deaminated glutathione), a metabolite repair reaction to dispose of the harmful deaminated glutathione. This Dictyostelium discoideum (Social amoeba) protein is Deaminated glutathione amidase (nit1-1).